The following is a 555-amino-acid chain: CTP synthase (555 aa).

Residues 1 to 271 form an amidoligase domain region; it reads MVKRGKKTKY…DDKLAELFNI (271 aa). A CTP-binding site is contributed by S19. Position 19 (S19) interacts with UTP. ATP contacts are provided by residues 20-25 and D77; that span reads SLGKGL. Residues D77 and E145 each contribute to the Mg(2+) site. CTP-binding positions include 152–154, 192–197, and K228; these read DIE and KTKPTQ. UTP-binding positions include 192-197 and K228; that span reads KTKPTQ. Residues 297 to 538 enclose the Glutamine amidotransferase type-1 domain; sequence RVGVVGKYVE…VHAAREQRDQ (242 aa). An L-glutamine-binding site is contributed by G358. C385 functions as the Nucleophile; for glutamine hydrolysis in the catalytic mechanism. L-glutamine is bound by residues 386–389, E409, and R466; that span reads LGLQ. Catalysis depends on residues H511 and E513.

Belongs to the CTP synthase family. Homotetramer.

The enzyme catalyses UTP + L-glutamine + ATP + H2O = CTP + L-glutamate + ADP + phosphate + 2 H(+). It catalyses the reaction L-glutamine + H2O = L-glutamate + NH4(+). The catalysed reaction is UTP + NH4(+) + ATP = CTP + ADP + phosphate + 2 H(+). It functions in the pathway pyrimidine metabolism; CTP biosynthesis via de novo pathway; CTP from UDP: step 2/2. Its activity is regulated as follows. Allosterically activated by GTP, when glutamine is the substrate; GTP has no effect on the reaction when ammonia is the substrate. The allosteric effector GTP functions by stabilizing the protein conformation that binds the tetrahedral intermediate(s) formed during glutamine hydrolysis. Inhibited by the product CTP, via allosteric rather than competitive inhibition. Its function is as follows. Catalyzes the ATP-dependent amination of UTP to CTP with either L-glutamine or ammonia as the source of nitrogen. Regulates intracellular CTP levels through interactions with the four ribonucleotide triphosphates. The polypeptide is CTP synthase (Anaeromyxobacter sp. (strain Fw109-5)).